Reading from the N-terminus, the 242-residue chain is Probable transcriptional regulatory protein lhv_0777 (242 aa).

Residues M1 to G22 are disordered.

Belongs to the TACO1 family.

The protein localises to the cytoplasm. This is Probable transcriptional regulatory protein lhv_0777 from Lactobacillus helveticus (strain DPC 4571).